We begin with the raw amino-acid sequence, 102 residues long: ATP-dependent Clp protease adapter protein ClpS (102 aa).

The protein belongs to the ClpS family. As to quaternary structure, binds to the N-terminal domain of the chaperone ClpA.

Involved in the modulation of the specificity of the ClpAP-mediated ATP-dependent protein degradation. The chain is ATP-dependent Clp protease adapter protein ClpS from Shewanella denitrificans (strain OS217 / ATCC BAA-1090 / DSM 15013).